Reading from the N-terminus, the 265-residue chain is Adenosine 5'-phosphosulfate reductase (265 aa).

Positions 135, 136, 218, and 221 each coordinate [4Fe-4S] cluster. Cys246 functions as the Nucleophile; cysteine thiosulfonate intermediate in the catalytic mechanism.

The protein belongs to the PAPS reductase family. CysH subfamily. Requires [4Fe-4S] cluster as cofactor.

The protein resides in the cytoplasm. It carries out the reaction [thioredoxin]-disulfide + sulfite + AMP + 2 H(+) = adenosine 5'-phosphosulfate + [thioredoxin]-dithiol. It participates in sulfur metabolism; hydrogen sulfide biosynthesis; sulfite from sulfate. Catalyzes the formation of sulfite from adenosine 5'-phosphosulfate (APS) using thioredoxin as an electron donor. The polypeptide is Adenosine 5'-phosphosulfate reductase (Rhizobium meliloti (strain 1021) (Ensifer meliloti)).